Reading from the N-terminus, the 97-residue chain is MSDYTRANFGGLSEGEAQFSMTARALLDELTDLEGKLRAKLDRWDGDAQAAYWNYQKEWDAAAKDMQNVVAQLGVAIREAHDNYQAAERANTSIWAG.

Belongs to the WXG100 family. ESAT-6 subfamily. As to quaternary structure, forms a tight 1:1 complex with EsxB. Forms a complex with EccC and EsxB, probably wholly mediated by EsxB.

The protein localises to the secreted. Its function is as follows. May help regulate assembly and function of the type VII secretion system (T7SS). EsxA disassembles pre-formed EccC-EsxB multimers, possibly by making EccC-EsxA-EsxB trimers instead of EccC-EsxB-EsxB-EccC tetramers. The chain is ESAT-6-like protein EsxA from Thermomonospora curvata (strain ATCC 19995 / DSM 43183 / JCM 3096 / KCTC 9072 / NBRC 15933 / NCIMB 10081 / Henssen B9).